Reading from the N-terminus, the 234-residue chain is Large ribosomal subunit protein uL1 (234 aa).

The protein belongs to the universal ribosomal protein uL1 family. Part of the 50S ribosomal subunit.

In terms of biological role, binds directly to 23S rRNA. The L1 stalk is quite mobile in the ribosome, and is involved in E site tRNA release. Its function is as follows. Protein L1 is also a translational repressor protein, it controls the translation of the L11 operon by binding to its mRNA. This Bartonella tribocorum (strain CIP 105476 / IBS 506) protein is Large ribosomal subunit protein uL1.